Consider the following 662-residue polypeptide: Mitochondrial Rho GTPase 1 (662 aa).

Residues 1–634 are Cytoplasmic-facing; it reads MTKETIRVVI…AKDVDYRQTA (634 aa). Residues 3-185 form the Miro 1 domain; that stretch reads KETIRVVICG…FYLCQRAITH (183 aa). GTP-binding positions include 12–19, 62–64, and 116–119; these read GDEGVGKS, DTS, and NKCD. 2 EF-hand domains span residues 201 to 236 and 330 to 365; these read LAVM…CFNK and KGYR…TPGL. Ca(2+)-binding residues include D214, N216, D218, Y220, E225, D343, D345, D347, and E354. A Miro 2 domain is found at 446 to 611; sequence RKVFNCFVIG…FIKITEAALD (166 aa). GTP contacts are provided by residues 455–462, 491–495, and 560–563; these read GKPCCGKS, ELKGG, and SKAD. A helical; Anchor for type IV membrane protein transmembrane segment spans residues 635–655; the sequence is LIFGSTVGFVALCSFTLMKLF. The Mitochondrial intermembrane portion of the chain corresponds to 656 to 662; the sequence is KSSKFSK.

This sequence belongs to the mitochondrial Rho GTPase family.

It is found in the mitochondrion outer membrane. In terms of biological role, mitochondrial GTPase involved in mitochondrial trafficking. Probably involved in control of anterograde transport of mitochondria and their subcellular distribution. In Saccharomyces cerevisiae (strain ATCC 204508 / S288c) (Baker's yeast), this protein is Mitochondrial Rho GTPase 1 (GEM1).